We begin with the raw amino-acid sequence, 625 residues long: Interferon-induced GTP-binding protein Mx2 (625 aa).

The 274-residue stretch at 29-302 folds into the Dynamin-type G domain; sequence DLALPAIAVI…LVFHIGRCLP (274 aa). Residues 39 to 46 form a G1 motif region; that stretch reads GDQSSGKS. 39–46 serves as a coordination point for GTP; that stretch reads GDQSSGKS. Residues 64–66 are G2 motif; that stretch reads VTR. The tract at residues 140–143 is G3 motif; it reads DLPG. GTP is bound by residues 140 to 144 and 209 to 212; these read DLPGI and TKPD. A G4 motif region spans residues 209-212; sequence TKPD. Positions 241–244 are G5 motif; sequence RCRG. The region spanning 539 to 625 is the GED domain; the sequence is REELTCHLKS…TEALKYLAKF (87 aa).

The protein belongs to the TRAFAC class dynamin-like GTPase superfamily. Dynamin/Fzo/YdjA family.

Its subcellular location is the cytoplasm. This is Interferon-induced GTP-binding protein Mx2 (mx2) from Ictalurus punctatus (Channel catfish).